Here is a 339-residue protein sequence, read N- to C-terminus: Dihydroorotate dehydrogenase (quinone) (339 aa).

FMN-binding positions include 62–66 (AGMDK) and Thr86. Lys66 contacts substrate. 111-115 (NRMGF) is a binding site for substrate. Residues Asn139 and Asn172 each contribute to the FMN site. Asn172 contributes to the substrate binding site. Ser175 acts as the Nucleophile in catalysis. Asn177 is a binding site for substrate. The FMN site is built by Lys217 and Thr245. 246 to 247 (NT) is a substrate binding site. FMN-binding positions include Gly268, Gly297, and 318 to 319 (YS).

This sequence belongs to the dihydroorotate dehydrogenase family. Type 2 subfamily. In terms of assembly, monomer. FMN serves as cofactor.

The protein localises to the cell membrane. It catalyses the reaction (S)-dihydroorotate + a quinone = orotate + a quinol. The protein operates within pyrimidine metabolism; UMP biosynthesis via de novo pathway; orotate from (S)-dihydroorotate (quinone route): step 1/1. Functionally, catalyzes the conversion of dihydroorotate to orotate with quinone as electron acceptor. This chain is Dihydroorotate dehydrogenase (quinone), found in Shewanella baltica (strain OS223).